Reading from the N-terminus, the 209-residue chain is Protein-L-isoaspartate O-methyltransferase (209 aa).

Residue Ser55 is part of the active site.

This sequence belongs to the methyltransferase superfamily. L-isoaspartyl/D-aspartyl protein methyltransferase family.

The protein resides in the cytoplasm. It carries out the reaction [protein]-L-isoaspartate + S-adenosyl-L-methionine = [protein]-L-isoaspartate alpha-methyl ester + S-adenosyl-L-homocysteine. In terms of biological role, catalyzes the methyl esterification of L-isoaspartyl residues in peptides and proteins that result from spontaneous decomposition of normal L-aspartyl and L-asparaginyl residues. It plays a role in the repair and/or degradation of damaged proteins. This chain is Protein-L-isoaspartate O-methyltransferase, found in Anaeromyxobacter dehalogenans (strain 2CP-C).